A 431-amino-acid chain; its full sequence is Serine hydroxymethyltransferase (431 aa).

Residues L121 and 125–127 each bind (6S)-5,6,7,8-tetrahydrofolate; that span reads GHL. The residue at position 230 (K230) is an N6-(pyridoxal phosphate)lysine. (6S)-5,6,7,8-tetrahydrofolate is bound at residue 369-371; that stretch reads SPF.

This sequence belongs to the SHMT family. In terms of assembly, homodimer. It depends on pyridoxal 5'-phosphate as a cofactor.

It is found in the cytoplasm. It catalyses the reaction (6R)-5,10-methylene-5,6,7,8-tetrahydrofolate + glycine + H2O = (6S)-5,6,7,8-tetrahydrofolate + L-serine. Its pathway is one-carbon metabolism; tetrahydrofolate interconversion. The protein operates within amino-acid biosynthesis; glycine biosynthesis; glycine from L-serine: step 1/1. Catalyzes the reversible interconversion of serine and glycine with tetrahydrofolate (THF) serving as the one-carbon carrier. This reaction serves as the major source of one-carbon groups required for the biosynthesis of purines, thymidylate, methionine, and other important biomolecules. Also exhibits THF-independent aldolase activity toward beta-hydroxyamino acids, producing glycine and aldehydes, via a retro-aldol mechanism. The polypeptide is Serine hydroxymethyltransferase (Cytophaga hutchinsonii (strain ATCC 33406 / DSM 1761 / CIP 103989 / NBRC 15051 / NCIMB 9469 / D465)).